A 529-amino-acid chain; its full sequence is Glucose transporter 2A (529 aa).

The tract at residues 1 to 22 is disordered; that stretch reads MTERRDNVSHAPDAIEGPNDGA. At 1–43 the chain is on the cytoplasmic side; that stretch reads MTERRDNVSHAPDAIEGPNDGAHAEDTSPGFFSFENLGVAQVQ. A helical transmembrane segment spans residues 44-64; the sequence is VVGGTLNGFSIGFVAVYILLY. Residues 65 to 119 are Extracellular-facing; sequence EVATNCSLFKTTEACKAVGSYGCEWKDTEVCSWKKECDSDSDGVNPCESLIGYSS. A helical membrane pass occupies residues 120–140; the sequence is LYSGIFASAMIVGSMVGSIIA. Topologically, residues 141–152 are cytoplasmic; the sequence is GKCITMFGLKKS. Residues 153 to 173 form a helical membrane-spanning segment; the sequence is FIIVGVMSVVASALNHISVAT. The Extracellular portion of the chain corresponds to 174–175; it reads NE. The helical transmembrane segment at 176 to 196 threads the bilayer; that stretch reads FWVLCAGRVLMGIGLGVVCVI. Over 197-214 the chain is Cytoplasmic; that stretch reads CPMYVNENAHPKLSKVDG. The helical transmembrane segment at 215–235 threads the bilayer; it reads VLFQVFITFGIMLAAMLGLIL. The Extracellular segment spans residues 236–250; it reads DKTVNYDNDPDMAGR. Residues 251–271 traverse the membrane as a helical segment; it reads FHGFCAVSSVLSVAMFLVGMF. At 272-300 the chain is on the cytoplasmic side; sequence LRESTATFSQDDDGKADGGMDPNEYGWGQ. Residues 301–321 form a helical membrane-spanning segment; the sequence is MLWPLFMGAVTAGTLQLTGIN. Topologically, residues 322 to 339 are extracellular; sequence AVMNYAPKITENLGMDPS. Residues 340–360 traverse the membrane as a helical segment; the sequence is LGNFLVMAWNFVTSLVAIPLA. Residues 361-368 lie on the Cytoplasmic side of the membrane; sequence SRFTMRQM. A helical membrane pass occupies residues 369–389; sequence FITCSFVASCMCLFLCGIPVF. At 390 to 404 the chain is on the extracellular side; the sequence is PGVAEEKVKNGVATT. A helical membrane pass occupies residues 405 to 425; sequence GIALFIAAFEFGVGSCFFVLA. Topologically, residues 426–439 are cytoplasmic; it reads QDLFPPSFRPKGSS. A helical membrane pass occupies residues 440–460; it reads FVVMMQFIFNILINLLYPITT. Residues 461–476 are Extracellular-facing; sequence EAISGGATGDQDKGQA. A helical transmembrane segment spans residues 477 to 497; that stretch reads VVFILFGLIGLICFVLQFFYL. The Cytoplasmic segment spans residues 498 to 529; that stretch reads YPYDANQDHENDHGTEPVERILSPVDVPTPRN. The segment at 508-529 is disordered; sequence NDHGTEPVERILSPVDVPTPRN.

The protein belongs to the major facilitator superfamily. Sugar transporter (TC 2.A.1.1) family.

Its subcellular location is the membrane. Functionally, facilitative glucose transporter. The sequence is that of Glucose transporter 2A (THT2A) from Trypanosoma brucei brucei.